Here is a 79-residue protein sequence, read N- to C-terminus: uncharacterized protein (79 aa).

Positions 3 to 54 (SKKNKIVAALLAFFFGGLGIHKFYLGRVGQGILYILFCWTGIPSIIAFIEFI) constitute a TM2 domain. 2 helical membrane-spanning segments follow: residues 8–28 (IVAA…FYLG) and 37–57 (ILFC…IIFL).

The protein localises to the cell membrane. This is an uncharacterized protein from Bacillus subtilis (strain 168).